Consider the following 248-residue polypeptide: Probable transcriptional regulatory protein Plav_2114 (248 aa).

Belongs to the TACO1 family.

It is found in the cytoplasm. This chain is Probable transcriptional regulatory protein Plav_2114, found in Parvibaculum lavamentivorans (strain DS-1 / DSM 13023 / NCIMB 13966).